Here is a 483-residue protein sequence, read N- to C-terminus: Cyclic AMP-dependent transcription factor ATF-7 (483 aa).

Residues 1 to 285 (MGDDRPFVCN…GMVVGTASTM (285 aa)) form a transactivation domain region. The C2H2-type zinc finger occupies 7–31 (FVCNAPGCGQRFTNEDHLAVHKHKH). Thr-51 carries the post-translational modification Phosphothreonine; by MAPK11. 2 positions are modified to phosphothreonine: Thr-53 and Thr-101. A Glycyl lysine isopeptide (Lys-Gly) (interchain with G-Cter in SUMO1) cross-link involves residue Lys-107. Disordered regions lie at residues 110-148 (EPVE…TPTP) and 299-345 (HPDA…NRAA). Composition is skewed to low complexity over residues 114–126 (VDSS…ASSP) and 307–320 (QPQV…PSTG). Residues 325 to 483 (RTVDEDPDER…MTPQSQSAGR (159 aa)) are essential for binding adenovirus 2 E1A. Over residues 326-343 (TVDEDPDERRQRFLERNR) the composition is skewed to basic and acidic residues. Residues 332 to 395 (DERRQRFLER…AQLKQLLLAH (64 aa)) enclose the bZIP domain. A basic motif region spans residues 334–354 (RRQRFLERNRAAASRCRQKRK). The interval 360–388 (LEKKAEELTSQNIQLSNEVTLLRNEVAQL) is leucine-zipper. The segment at 407 to 439 (TQGYLESPKESSEPTGSPAPVIQHSSATAPSNG) is disordered. Phosphoserine is present on residues Ser-413 and Ser-423. The span at 429–439 (QHSSATAPSNG) shows a compositional bias: polar residues.

It belongs to the bZIP family. Homodimer; binds DNA as homodimer. Heterodimer; heterodimerizes with other members of ATF family and with JUN family members. Interacts with JNK2; the interaction does not phosphorylate ATF7 but acts as a docking site for other ATF-associated partners such as JUN family members. Interacts (via its transactivation domain) with TAF12 (isoforms TAFII15 and TAFII20); the interaction potentiates the transactivation activity (isoform TAFII20 only) and is inhibited by ATF7 sumoylation. Interacts with TAF4; the interaction inhibits the TAF12-dependent transactivation. Interacts with MAPK9; the interaction does not phosphorylate ATF7 but acts as a docking site for ATF7-associated partners such as JUN. Interacts with Ku complex components XRCC6 and XRCC7. Interacts with TERT. As to quaternary structure, (Microbial infection) Interacts with adenovirus 2 E1A; the interaction enhances the ATF7-mediated viral transactivation activity which requires the zinc-binding domains of both E1A and ATF7. Post-translationally, on EGF stimulation, phosphorylated first on Thr-53 allowing subsequent phosphorylation on Thr-51. This latter phosphorylation prevents sumoylation, increases binding to TAF12 and enhances transcriptional activity. In terms of processing, sumoylation delays nuclear localization and inhibits transactivation activity through preventing binding to TAF12. RANBP2 appears to be the specific E3 ligase. On EGF stimulation, phosphorylated first on Thr-53 allowing subsequent phosphorylation on Thr-51. This latter phosphorylation prevents sumoylation, increases binding to TAF12 and enhances transcriptional activity. Social isolation stress as well as TNF-alpha also induce the phosphorylation of ATF7. Phosphorylated in proliferating colonic and small intestinal epithelial cells. As to expression, expressed in various tissues including heart, brain, placenta, lung and skeletal muscle. Highest levels in skeletal muscle. Lowest in lung and placenta. Strongly expressed in skeletal muscle. Also expressed at lower levels in heart and lung.

The protein localises to the nucleus. It is found in the nucleoplasm. The protein resides in the chromosome. Its subcellular location is the telomere. It localises to the cytoplasm. Functionally, stress-responsive chromatin regulator that plays a role in various biological processes including innate immunological memory, adipocyte differentiation or telomerase regulation. In absence of stress, contributes to the formation of heterochromatin and heterochromatin-like structure by recruiting histone H3K9 tri- and di-methyltransferases thus silencing the transcription of target genes such as STAT1 in adipocytes, or genes involved in innate immunity in macrophages and adipocytes. Stress induces ATF7 phosphorylation that disrupts interactions with histone methyltransferase and enhances the association with coactivators containing histone acetyltransferase and/or histone demethylase, leading to disruption of the heterochromatin-like structure and subsequently transcriptional activation. In response to TNF-alpha, which is induced by various stresses, phosphorylated ATF7 and telomerase are released from telomeres leading to telomere shortening. Also plays a role in maintaining epithelial regenerative capacity and protecting against cell death during intestinal epithelial damage and repair. Acts as a dominant repressor of the E-selectin/NF-ELAM1/delta-A promoter. In terms of biological role, acts as a negative regulator, inhibiting both ATF2 and ATF7 transcriptional activities. It may exert these effects by sequestrating in the cytoplasm the Thr-53 phosphorylating kinase, preventing activation. The chain is Cyclic AMP-dependent transcription factor ATF-7 (ATF7) from Homo sapiens (Human).